We begin with the raw amino-acid sequence, 288 residues long: Acidic endochitinase SP2 (288 aa).

A signal peptide spans Met1–Ala27. Gln28 is subject to Pyrrolidone carboxylic acid. In terms of domain architecture, Chitin-binding type-1 spans Gln28–Gly63. 4 cysteine pairs are disulfide-bonded: Cys30–Cys38, Cys32–Cys44, Cys37–Cys51, and Cys56–Cys61. The segment covering Gly64–Pro78 has biased composition (low complexity). Residues Gly64–Gly84 are disordered. The segment at Gly64–Ser85 is hinge region (Gly/Pro/Thr-rich). Pro66, Pro69, Pro72, and Pro75 each carry 4-hydroxyproline. Repeat copies occupy residues Thr67–Pro69, Thr70–Pro72, Thr73–Pro75, and Thr76–Pro78. Residues Thr67–Pro78 form a 4 X 3 AA tandem repeats of T-T-P region. A catalytic region spans residues Ser86–Cys288. 3 disulfides stabilise this stretch: Cys107-Cys154, Cys168-Cys178, and Cys256-Cys288. Glu149 serves as the catalytic Proton donor.

This sequence belongs to the glycosyl hydrolase 19 family. Chitinase class I subfamily. Post-translationally, O-glycosylated on hydroxyprolines; contains xylose. In terms of tissue distribution, localized to infected area.

The protein resides in the secreted. It localises to the extracellular space. The enzyme catalyses Random endo-hydrolysis of N-acetyl-beta-D-glucosaminide (1-&gt;4)-beta-linkages in chitin and chitodextrins.. Its function is as follows. Defense against chitin-containing fungal pathogens. This Beta vulgaris (Sugar beet) protein is Acidic endochitinase SP2 (SP2).